A 105-amino-acid polypeptide reads, in one-letter code: Large ribosomal subunit protein uL24 (105 aa).

The protein belongs to the universal ribosomal protein uL24 family. In terms of assembly, part of the 50S ribosomal subunit.

In terms of biological role, one of two assembly initiator proteins, it binds directly to the 5'-end of the 23S rRNA, where it nucleates assembly of the 50S subunit. Functionally, one of the proteins that surrounds the polypeptide exit tunnel on the outside of the subunit. This Xanthomonas campestris pv. campestris (strain 8004) protein is Large ribosomal subunit protein uL24.